Reading from the N-terminus, the 772-residue chain is Carnitine O-palmitoyltransferase 1, muscle isoform (772 aa).

The Cytoplasmic portion of the chain corresponds to 1–47 (MAEAHQAVAFQFTVTPDGVDFRLSREALRHIYLSGINSWKKRLIRIK). The helical transmembrane segment at 48–73 (NGILRGVYPGSPTSWLVVVMATVGSN) threads the bilayer. The Mitochondrial intermembrane segment spans residues 74–102 (YCKVDISMGLVHCIQRCLPTRYGSYGTPQ). A helical membrane pass occupies residues 103 to 122 (TETLLSMVIFSTGVWATGIF). Residues 123-772 (LFRQTLKLLL…DLFKISKTDS (650 aa)) lie on the Cytoplasmic side of the membrane. The Proton acceptor role is filled by His-473. Residue 555–567 (GKGLIKKCRTSPD) coordinates CoA. 2 residues coordinate (R)-carnitine: Tyr-589 and Thr-602.

This sequence belongs to the carnitine/choline acetyltransferase family. In terms of tissue distribution, high expression in heart, skeletal muscle and brown adipose tissue. Also expressed in white adipose tissue, but not in liver.

Its subcellular location is the mitochondrion outer membrane. The catalysed reaction is (R)-carnitine + hexadecanoyl-CoA = O-hexadecanoyl-(R)-carnitine + CoA. The protein operates within lipid metabolism; fatty acid beta-oxidation. In terms of biological role, catalyzes the transfer of the acyl group of long-chain fatty acid-CoA conjugates onto carnitine, an essential step for the mitochondrial uptake of long-chain fatty acids and their subsequent beta-oxidation in the mitochondrion. The sequence is that of Carnitine O-palmitoyltransferase 1, muscle isoform (Cpt1b) from Rattus norvegicus (Rat).